Consider the following 231-residue polypeptide: MEEITINIDKIKINDDWKEFLRDEFQKKYFLEIKKQYLNAINQNIIIYPPANLIFNAFNLCPLKEIKIIILGQDPYHQPNQAMGLSFSVPKNVKIPPSLNNVFKELQNDLNITPAKSGDLSSWAKQGVLLLNSILSVEANKAASHSSWGWQEFSDAIIHKLSNEKSGLVFMLWGNYAKNKEILIDNAKHLILKAAHPSPLARTGFLGCKHFSKANEFLKKVGKIPIDWKIV.

The active-site Proton acceptor is the Asp-74.

This sequence belongs to the uracil-DNA glycosylase (UDG) superfamily. UNG family.

Its subcellular location is the cytoplasm. It carries out the reaction Hydrolyzes single-stranded DNA or mismatched double-stranded DNA and polynucleotides, releasing free uracil.. In terms of biological role, excises uracil residues from the DNA which can arise as a result of misincorporation of dUMP residues by DNA polymerase or due to deamination of cytosine. The polypeptide is Uracil-DNA glycosylase (Campylobacter jejuni subsp. jejuni serotype O:6 (strain 81116 / NCTC 11828)).